Consider the following 1084-residue polypeptide: Probable sucrose-phosphate synthase 1 (1084 aa).

Gly residues predominate over residues 25-46; it reads GGGGGGGGGGGGGGGGGGGGGV. The tract at residues 25–61 is disordered; it reads GGGGGGGGGGGGGGGGGGGGGVDPRSPAAGAASPRGP. Positions 48-61 are enriched in low complexity; it reads PRSPAAGAASPRGP.

The protein belongs to the glycosyltransferase 1 family. Homodimer or homotetramer. In terms of tissue distribution, expressed in leaves mesophyll cells, scutellum of germinating seedlings and pollen of immature inflorescences.

It catalyses the reaction beta-D-fructose 6-phosphate + UDP-alpha-D-glucose = sucrose 6(F)-phosphate + UDP + H(+). Its pathway is glycan biosynthesis; sucrose biosynthesis; sucrose from D-fructose 6-phosphate and UDP-alpha-D-glucose: step 1/2. Activity is regulated by phosphorylation and moderated by concentration of metabolites and light. Plays a role in photosynthetic sucrose synthesis by catalyzing the rate-limiting step of sucrose biosynthesis from UDP-glucose and fructose- 6-phosphate. Involved in the regulation of carbon partitioning in the leaves of plants. May regulate the synthesis of sucrose and therefore play a major role as a limiting factor in the export of photoassimilates out of the leaf. Plays a role for sucrose availability that is essential for plant growth and fiber elongation. This chain is Probable sucrose-phosphate synthase 1 (SPS1), found in Oryza sativa subsp. indica (Rice).